The chain runs to 488 residues: Neisserial heparin binding antigen (488 aa).

An N-terminal signal peptide occupies residues 1 to 17 (MFKRSVIAMACIFALSA). Residue Cys18 is the site of N-palmitoyl cysteine attachment. A lipid anchor (S-diacylglycerol cysteine) is attached at Cys18. The tract at residues 21–201 (GGGGSPDVKS…NPAPANGGSN (181 aa)) is disordered. The segment covering 43–53 (SEKETEAKEDA) has biased composition (basic and acidic residues). The span at 54–70 (PQAGSQGQGAPSAQGSQ) shows a compositional bias: low complexity. Composition is skewed to polar residues over residues 101 to 118 (DMPQ…NHTP) and 127 to 142 (MENQ…QPAN). Over residues 160–183 (AGGQNAGNTAAQGANQAGNNQAAG) the composition is skewed to low complexity. The Arg-rich motif motif lies at 296 to 306 (RFRRSARSRRS). The C1 fragment stretch occupies residues 306-488 (SLPAEMPLIP…GVFAGKKEQD (183 aa)).

This sequence belongs to the NHBA family. In terms of assembly, the C-terminal beta-barrel forms a monomer. Cleaved in vivo by the Neisserial phase-variable autotransporter/serine protease NalP to give 2 fragments. The N-terminus remains in the cell outer membrane while the 22 kDa C-terminus (beginning on Ser-293) is soluble; this soluble fragment is called C2. Cleaved in vitro by human lactoferrin (LTF, between Arg-305 and Ser-306), this fragment is called C1. Cleavage by NalP or lactoferrin does not alter killing of Neisseria by bactericidal antibodies in vitro. Recombinant and cell surface protein is cleaved by human saliva kallikrein (KLK1) between Ser-303 and Arg-304; in saliva kallikrein is more active on NHBA than lactoferrin. Human plasma kallikrein (KLKB1) cleaves in a similar manner to KLK1.

It is found in the cell outer membrane. Its subcellular location is the cell surface. It localises to the host mitochondrion. Functionally, a major human immunogenic protein detected in patients recovering from meningitidis, where it induces bactericidal antibodies. Binds heparin and heparan sulfate proteoglycan in vitro via the Arg-rich motif. Heparin-binding to this protein protects bacteria against killing by bactericidal antibodies (serum killing). Binds to human cells via the Arg-rich region; binding may require the intact protein as protein fragments do not bind to human cells. Protein binding to human cells is abolished by treatment with heparinase III but not chondroitinase ABC. The bacteria binds a number of human extracellular sialyated and/or sulfated glycans via this protein, including chondroitin sulfate (KD=5.2 nM), heparin (KD=52 nM) and ganglioside GT3 (KD=210 nM). The recombinant protein binds DNA non-specifically. In terms of biological role, plays a role in extracellular-DNA (eDNA) mediated biofilm formation. In strain MC58 eDNA stimulates biofilm formation. When NHBA is not processed by NalP there is an increase in positively charged, NHBA- and IgA-derived DNA-binding peptides on the cell surface, resulting in increased DNA-binding peptides and increased biofilm formation. Its function is as follows. [C2 fragment] Localizes to host mitochondria when applied to the apical side of human endothelial cell layers, where it induces production of reactive oxygen species which lead to increased permeability of host endothelial cells. The C1 fragment (which lacks the first 14 residues of C2) does not have this effect. It is not known if this occurs during Neisseria infections. In Neisseria meningitidis serogroup B (strain ATCC BAA-335 / MC58), this protein is Neisserial heparin binding antigen.